The following is a 296-amino-acid chain: Phosphatidylglycerol--prolipoprotein diacylglyceryl transferase (296 aa).

The next 3 helical transmembrane spans lie at L17–G37, M59–Y79, and G97–W117. R142 is an a 1,2-diacyl-sn-glycero-3-phospho-(1'-sn-glycerol) binding site. Transmembrane regions (helical) follow at residues M230–F250 and F257–L277.

It belongs to the Lgt family.

Its subcellular location is the cell inner membrane. It carries out the reaction L-cysteinyl-[prolipoprotein] + a 1,2-diacyl-sn-glycero-3-phospho-(1'-sn-glycerol) = an S-1,2-diacyl-sn-glyceryl-L-cysteinyl-[prolipoprotein] + sn-glycerol 1-phosphate + H(+). The protein operates within protein modification; lipoprotein biosynthesis (diacylglyceryl transfer). Its function is as follows. Catalyzes the transfer of the diacylglyceryl group from phosphatidylglycerol to the sulfhydryl group of the N-terminal cysteine of a prolipoprotein, the first step in the formation of mature lipoproteins. This is Phosphatidylglycerol--prolipoprotein diacylglyceryl transferase from Burkholderia lata (strain ATCC 17760 / DSM 23089 / LMG 22485 / NCIMB 9086 / R18194 / 383).